The chain runs to 330 residues: Fructose-1,6-bisphosphatase class 1 (330 aa).

Residues E84, D103, L105, and D106 each contribute to the Mg(2+) site. Substrate contacts are provided by residues 106 to 109, N196, and K262; that span reads DGSS. Residue E268 coordinates Mg(2+).

This sequence belongs to the FBPase class 1 family. Homotetramer. Mg(2+) serves as cofactor.

It is found in the cytoplasm. It carries out the reaction beta-D-fructose 1,6-bisphosphate + H2O = beta-D-fructose 6-phosphate + phosphate. It participates in carbohydrate biosynthesis; gluconeogenesis. The sequence is that of Fructose-1,6-bisphosphatase class 1 from Shewanella baltica (strain OS185).